Consider the following 938-residue polypeptide: Protein SEY1 (938 aa).

The disordered stretch occupies residues 1 to 159; sequence MTSQSHGAPP…QKSAKSTPGS (159 aa). Residues 1–839 lie on the Cytoplasmic side of the membrane; it reads MTSQSHGAPP…KRSTIQSTTQ (839 aa). Low complexity predominate over residues 33 to 45; that stretch reads SVSSSHSSHSPVT. Pro residues predominate over residues 74-94; that stretch reads IAAPEPIAAPEPIPAPEPIAA. A compositionally biased stretch (basic and acidic residues) spans 100 to 118; sequence LKSEHKPVEREHKPVERKP. A compositionally biased stretch (polar residues) spans 146–158; it reads VPTSQKSAKSTPG. The 232-residue stretch at 192-423 folds into the GB1/RHD3-type G domain; that stretch reads GLDYHVVAVF…DPNYVFKPVY (232 aa). Residue 202 to 209 participates in GTP binding; it reads GSQSTGKS. Positions 603–630 form a coiled coil; the sequence is SYDDTLAALEQELDTLRDHKSKVEIDRL. Residues 840–860 traverse the membrane as a helical segment; that stretch reads IPLYMYGLLLLLGWNEIMAVL. Topologically, residues 861-863 are lumenal; that stretch reads RSP. A helical membrane pass occupies residues 864-884; that stretch reads VYFMFLLVAAGAAYVIHTLHL. Topologically, residues 885-938 are cytoplasmic; that stretch reads WGPLTHMTNTMIAEATDMAKAKLKQVLNEAPTGETREREAPVGSSRDDVELKDL. A disordered region spans residues 911–938; that stretch reads LNEAPTGETREREAPVGSSRDDVELKDL. Residues 918-938 show a composition bias toward basic and acidic residues; that stretch reads ETREREAPVGSSRDDVELKDL.

The protein belongs to the TRAFAC class dynamin-like GTPase superfamily. GB1/RHD3 GTPase family. RHD3 subfamily.

The protein localises to the endoplasmic reticulum membrane. In terms of biological role, cooperates with the reticulon proteins and tubule-shaping DP1 family proteins to generate and maintain the structure of the tubular endoplasmic reticulum network. Has GTPase activity, which is required for its function in ER organization. The chain is Protein SEY1 from Yarrowia lipolytica (strain CLIB 122 / E 150) (Yeast).